The chain runs to 276 residues: Homeobox-leucine zipper protein HOX22 (276 aa).

The homeobox DNA-binding region spans 70 to 130; it reads AGERKRRFTE…NKRARWRSKQ (61 aa). A leucine-zipper region spans residues 129 to 173; sequence KQLEHDYAALRSKYDALHSRVESLKQEKLALTVQLHELRERLRER. Residues 170 to 212 are disordered; that stretch reads LREREERSGNGGAATTAASSSSCNGSGSEEVDDDDDKRNAAAG. A compositionally biased stretch (low complexity) spans 182-197; it reads AATTAASSSSCNGSGS.

Belongs to the HD-ZIP homeobox family. Class I subfamily. As to expression, expressed in seedlings, roots, stems, leaf sheaths and blades and panicles.

Its subcellular location is the nucleus. Probable transcription factor. This chain is Homeobox-leucine zipper protein HOX22 (HOX22), found in Oryza sativa subsp. japonica (Rice).